A 154-amino-acid chain; its full sequence is Ribosome maturation factor RimP (154 aa).

Belongs to the RimP family.

It localises to the cytoplasm. Functionally, required for maturation of 30S ribosomal subunits. This Deinococcus deserti (strain DSM 17065 / CIP 109153 / LMG 22923 / VCD115) protein is Ribosome maturation factor RimP.